Reading from the N-terminus, the 540-residue chain is Chaperonin GroEL 4 (540 aa).

Residues 29–32 (TLGP), 86–90 (DGTTT), G413, 477–479 (NAA), and D493 each bind ATP.

Belongs to the chaperonin (HSP60) family. As to quaternary structure, forms a cylinder of 14 subunits composed of two heptameric rings stacked back-to-back. Interacts with the co-chaperonin GroES.

The protein localises to the cytoplasm. The enzyme catalyses ATP + H2O + a folded polypeptide = ADP + phosphate + an unfolded polypeptide.. Together with its co-chaperonin GroES, plays an essential role in assisting protein folding. The GroEL-GroES system forms a nano-cage that allows encapsulation of the non-native substrate proteins and provides a physical environment optimized to promote and accelerate protein folding. This chain is Chaperonin GroEL 4, found in Frankia casuarinae (strain DSM 45818 / CECT 9043 / HFP020203 / CcI3).